We begin with the raw amino-acid sequence, 82 residues long: Chlorosome protein E (82 aa).

His26 is an a bacteriochlorophyll c binding site. Residues 55 to 82 are disordered; that stretch reads GSSGLKGSSPKYSGYATPSKEVKSRFEK. Residues 59–69 show a composition bias toward low complexity; sequence LKGSSPKYSGY.

It belongs to the BChl C/E-binding protein family.

Its subcellular location is the chlorosome. The protein resides in the chlorosome envelope. Its function is as follows. Component of the photosynthetic apparatus. The light harvesting B740 complex binds bacteriochlorophyll c. The polypeptide is Chlorosome protein E (csmE) (Chlorobaculum tepidum (strain ATCC 49652 / DSM 12025 / NBRC 103806 / TLS) (Chlorobium tepidum)).